Here is a 774-residue protein sequence, read N- to C-terminus: Transforming acidic coiled-coil-containing protein 1 (774 aa).

A2 is subject to N-acetylalanine. An interaction with LSM7 and SNRPG region spans residues 2 to 56 (AFSPWQILSPVQWAKWTWSAVRGSGAGEDEAGGPEGDPEEEEDSQAETKSLSFSS). Phosphoserine occurs at positions 4, 10, and 45. The interval 21–142 (AVRGSGAGED…VKDVRGKAEH (122 aa)) is disordered. The span at 28–46 (GEDEAGGPEGDPEEEEDSQ) shows a compositional bias: acidic residues. The segment covering 48 to 61 (ETKSLSFSSDSEGN) has biased composition (polar residues). The span at 88-99 (PEAKPQESREAD) shows a compositional bias: basic and acidic residues. Over residues 113 to 128 (DTCSRSSENEAPQATV) the composition is skewed to polar residues. Basic and acidic residues predominate over residues 131–142 (HPVKDVRGKAEH). 2 positions are modified to phosphoserine: S148 and S154. The tract at residues 153-255 (FSIETRNCTD…PEMLMEGSPL (103 aa)) is interaction with TDRD7. Positions 207–424 (EAFTEASLKT…NNINTDDSGD (218 aa)) are interaction with YEATS4. The interval 214-428 (LKTGGPCPEP…TDDSGDPCKP (215 aa)) is disordered. SPAZ domains follow at residues 216–294 (TGGP…TAGV) and 354–504 (SKPV…TDEE). S228 carries the phosphoserine; by AURKC modification. Residues 228 to 241 (SKLRKPKPVSLRKK) show a composition bias toward basic residues. Residues S376 and S401 each carry the phosphoserine modification. A compositionally biased stretch (polar residues) spans 397–407 (ILQNSPPLSSK). The short motif at 452-468 (PKKAKSRLITSGCKVKK) is the Bipartite nuclear localization signal element. Phosphoserine is present on residues S480 and S560. Residues 579 to 774 (IREEIITKEI…ELIAKLGKTD (196 aa)) adopt a coiled-coil conformation. Positions 670–774 (VLEGFKKNEE…ELIAKLGKTD (105 aa)) are interaction with CH-TOG.

The protein belongs to the TACC family. In terms of assembly, interacts with CH-TOG and YEATS4. Interacts with the AURKA and AURKB and AURKC. Interacts with LSM7, TDRD7 and SNRPG. Interacts with GCN5L2 and PCAF. Interacts with the thyroid hormone receptors THRB and THRA, predominantly with isoform alpha-2. The interaction with THRA isoform alpha-1 and THRB is decreased in the presence of thyroid hormone T3. Interacts with RARA in the nucleus. Also interacts with other nuclear receptors, including ESR1, NR3C1, PPARG and RXRA, preferentially in the absence of their hormonal ligands.

It localises to the cytoplasm. The protein localises to the nucleus. It is found in the cytoskeleton. Its subcellular location is the microtubule organizing center. The protein resides in the centrosome. It localises to the midbody. In terms of biological role, involved in transcription regulation induced by nuclear receptors, including in T3 thyroid hormone and all-trans retinoic acid pathways. Might promote the nuclear localization of the receptors. Likely involved in the processes that promote cell division prior to the formation of differentiated tissues. In Mus musculus (Mouse), this protein is Transforming acidic coiled-coil-containing protein 1 (Tacc1).